The sequence spans 367 residues: Probable butyrate kinase (367 aa).

This sequence belongs to the acetokinase family.

It is found in the cytoplasm. It carries out the reaction butanoate + ATP = butanoyl phosphate + ADP. The chain is Probable butyrate kinase from Bacillus cereus (strain ATCC 10987 / NRS 248).